Reading from the N-terminus, the 739-residue chain is Phosphoribosylformylglycinamidine synthase subunit PurL (739 aa).

The active site involves His54. Positions 57 and 96 each coordinate ATP. Glu98 serves as a coordination point for Mg(2+). Substrate contacts are provided by residues 99-102 and Arg121; that span reads SHNH. His100 acts as the Proton acceptor in catalysis. Residue Asp122 participates in Mg(2+) binding. Gln245 is a substrate binding site. Asp273 provides a ligand contact to Mg(2+). 317–319 is a substrate binding site; that stretch reads ESQ. ATP-binding residues include Asp500 and Gly537. Asn538 contacts Mg(2+). Ser540 lines the substrate pocket.

It belongs to the FGAMS family. Monomer. Part of the FGAM synthase complex composed of 1 PurL, 1 PurQ and 2 PurS subunits.

The protein resides in the cytoplasm. The enzyme catalyses N(2)-formyl-N(1)-(5-phospho-beta-D-ribosyl)glycinamide + L-glutamine + ATP + H2O = 2-formamido-N(1)-(5-O-phospho-beta-D-ribosyl)acetamidine + L-glutamate + ADP + phosphate + H(+). Its pathway is purine metabolism; IMP biosynthesis via de novo pathway; 5-amino-1-(5-phospho-D-ribosyl)imidazole from N(2)-formyl-N(1)-(5-phospho-D-ribosyl)glycinamide: step 1/2. In terms of biological role, part of the phosphoribosylformylglycinamidine synthase complex involved in the purines biosynthetic pathway. Catalyzes the ATP-dependent conversion of formylglycinamide ribonucleotide (FGAR) and glutamine to yield formylglycinamidine ribonucleotide (FGAM) and glutamate. The FGAM synthase complex is composed of three subunits. PurQ produces an ammonia molecule by converting glutamine to glutamate. PurL transfers the ammonia molecule to FGAR to form FGAM in an ATP-dependent manner. PurS interacts with PurQ and PurL and is thought to assist in the transfer of the ammonia molecule from PurQ to PurL. In Bacillus cereus (strain Q1), this protein is Phosphoribosylformylglycinamidine synthase subunit PurL.